Reading from the N-terminus, the 245-residue chain is Caffeoyl-CoA O-methyltransferase (245 aa).

Lysine 19 is a binding site for substrate. S-adenosyl-L-methionine-binding positions include threonine 61, glutamate 83, 85–86 (GV), serine 91, aspartate 109, and alanine 138. Position 161 (aspartate 161) interacts with substrate. Aspartate 161 contributes to the a divalent metal cation binding site. Aspartate 163 is a binding site for S-adenosyl-L-methionine. A divalent metal cation is bound by residues aspartate 187 and asparagine 188. Asparagine 192 contacts substrate.

The protein belongs to the class I-like SAM-binding methyltransferase superfamily. Cation-dependent O-methyltransferase family. CCoAMT subfamily. A divalent metal cation serves as cofactor.

The catalysed reaction is (E)-caffeoyl-CoA + S-adenosyl-L-methionine = (E)-feruloyl-CoA + S-adenosyl-L-homocysteine + H(+). It participates in aromatic compound metabolism; phenylpropanoid biosynthesis. Functionally, methylates caffeoyl-CoA to feruloyl-CoA and 5-hydroxyferuloyl-CoA to sinapoyl-CoA. Plays a role in the synthesis of feruloylated polysaccharides. Involved in the reinforcement of the plant cell wall. Also involved in the responding to wounding or pathogen challenge by the increased formation of cell wall-bound ferulic acid polymers. This is Caffeoyl-CoA O-methyltransferase (CCOAOMT) from Zinnia elegans (Garden zinnia).